A 339-amino-acid chain; its full sequence is Phenylalanine--tRNA ligase alpha subunit (339 aa).

Residue glutamate 247 participates in Mg(2+) binding.

It belongs to the class-II aminoacyl-tRNA synthetase family. Phe-tRNA synthetase alpha subunit type 1 subfamily. As to quaternary structure, tetramer of two alpha and two beta subunits. Requires Mg(2+) as cofactor.

The protein resides in the cytoplasm. It carries out the reaction tRNA(Phe) + L-phenylalanine + ATP = L-phenylalanyl-tRNA(Phe) + AMP + diphosphate + H(+). The sequence is that of Phenylalanine--tRNA ligase alpha subunit from Deinococcus geothermalis (strain DSM 11300 / CIP 105573 / AG-3a).